Here is a 548-residue protein sequence, read N- to C-terminus: Beta-lactamase-like protein 2 (548 aa).

The first 24 residues, 1–24, serve as a signal peptide directing secretion; the sequence is MKIMNKQSITIFLIICFLINLILS. Asn-237, Asn-258, Asn-443, and Asn-459 each carry an N-linked (GlcNAc...) asparagine glycan.

Belongs to the beta-lactamase family.

The protein resides in the secreted. In Dictyostelium discoideum (Social amoeba), this protein is Beta-lactamase-like protein 2.